We begin with the raw amino-acid sequence, 544 residues long: Peptide chain release factor 3 (544 aa).

The region spanning 17–286 is the tr-type G domain; the sequence is EKRRNFAIIS…SFLDYGLAPR (270 aa). GTP is bound by residues 26–33, 94–98, and 148–151; these read SHPDAGKT, DTPGH, and NKMD.

Belongs to the TRAFAC class translation factor GTPase superfamily. Classic translation factor GTPase family. PrfC subfamily.

The protein localises to the cytoplasm. Its function is as follows. Increases the formation of ribosomal termination complexes and stimulates activities of RF-1 and RF-2. It binds guanine nucleotides and has strong preference for UGA stop codons. It may interact directly with the ribosome. The stimulation of RF-1 and RF-2 is significantly reduced by GTP and GDP, but not by GMP. In Microcystis aeruginosa (strain NIES-843 / IAM M-2473), this protein is Peptide chain release factor 3.